Reading from the N-terminus, the 149-residue chain is Large ribosomal subunit protein uL16 (149 aa).

It belongs to the universal ribosomal protein uL16 family. In terms of assembly, part of the 50S ribosomal subunit.

Its function is as follows. Binds 23S rRNA and is also seen to make contacts with the A and possibly P site tRNAs. The polypeptide is Large ribosomal subunit protein uL16 (Dehalococcoides mccartyi (strain ATCC BAA-2100 / JCM 16839 / KCTC 5957 / BAV1)).